The sequence spans 139 residues: ATP synthase epsilon chain (139 aa).

It belongs to the ATPase epsilon chain family. In terms of assembly, F-type ATPases have 2 components, CF(1) - the catalytic core - and CF(0) - the membrane proton channel. CF(1) has five subunits: alpha(3), beta(3), gamma(1), delta(1), epsilon(1). CF(0) has three main subunits: a, b and c.

The protein localises to the cell membrane. Functionally, produces ATP from ADP in the presence of a proton gradient across the membrane. The chain is ATP synthase epsilon chain from Ligilactobacillus salivarius (strain UCC118) (Lactobacillus salivarius).